The chain runs to 261 residues: Sepiapterin reductase (261 aa).

Residues 16–22, 44–45, and 71–72 each bind NADP(+); these read GASRGFG, RT, and DL. Substrate-binding positions include 158 to 159 and Tyr-171; that span reads SL. Lys-175 is an NADP(+) binding site. Gly-200 is a substrate binding site. 202–207 contributes to the NADP(+) binding site; sequence LDTDMH. Asp-258 serves as a coordination point for substrate.

This sequence belongs to the sepiapterin reductase family. In terms of assembly, homodimer.

It localises to the cytoplasm. The catalysed reaction is L-erythro-7,8-dihydrobiopterin + NADP(+) = L-sepiapterin + NADPH + H(+). It carries out the reaction (6R)-L-erythro-5,6,7,8-tetrahydrobiopterin + 2 NADP(+) = 6-pyruvoyl-5,6,7,8-tetrahydropterin + 2 NADPH + 2 H(+). Catalyzes the final one or two reductions in tetra-hydrobiopterin biosynthesis to form 5,6,7,8-tetrahydrobiopterin. The sequence is that of Sepiapterin reductase (spr) from Xenopus tropicalis (Western clawed frog).